The primary structure comprises 609 residues: Glutamine--fructose-6-phosphate aminotransferase [isomerizing] (609 aa).

The Nucleophile; for GATase activity role is filled by Cys-2. The Glutamine amidotransferase type-2 domain occupies Cys-2–Arg-218. SIS domains follow at residues Ala-286 to Met-426 and Leu-458 to Pro-599. The active-site For Fru-6P isomerization activity is the Lys-604.

As to quaternary structure, homodimer.

The protein resides in the cytoplasm. It carries out the reaction D-fructose 6-phosphate + L-glutamine = D-glucosamine 6-phosphate + L-glutamate. In terms of biological role, catalyzes the first step in hexosamine metabolism, converting fructose-6P into glucosamine-6P using glutamine as a nitrogen source. The polypeptide is Glutamine--fructose-6-phosphate aminotransferase [isomerizing] (Shewanella oneidensis (strain ATCC 700550 / JCM 31522 / CIP 106686 / LMG 19005 / NCIMB 14063 / MR-1)).